The primary structure comprises 112 residues: Peptidyl-tRNA hydrolase (112 aa).

Residues 64 to 99 are disordered; it reads EEAKRAGLPTGLISDAGRTQLEPGTPTALAIGPAPD.

Belongs to the PTH2 family.

Its subcellular location is the cytoplasm. It catalyses the reaction an N-acyl-L-alpha-aminoacyl-tRNA + H2O = an N-acyl-L-amino acid + a tRNA + H(+). The natural substrate for this enzyme may be peptidyl-tRNAs which drop off the ribosome during protein synthesis. The chain is Peptidyl-tRNA hydrolase from Halobacterium salinarum (strain ATCC 29341 / DSM 671 / R1).